The chain runs to 30 residues: 2-enoate reductase (30 aa).

As to quaternary structure, dodecamer; tetramer of trimers. The cofactor is iron-sulfur cluster. FAD is required as a cofactor. It depends on FMN as a cofactor.

It catalyses the reaction butanoate + NAD(+) = (2E)-2-butenoate + NADH + H(+). Its function is as follows. Involved in fermentation of amino acids (Stickland reaction) such as leucine, isoleucine, valine and phenylalanine. The sequence is that of 2-enoate reductase from Clostridium tyrobutyricum.